We begin with the raw amino-acid sequence, 139 residues long: Ribulose bisphosphate carboxylase small subunit (139 aa).

The protein belongs to the RuBisCO small chain family. In terms of assembly, heterohexadecamer of 8 large and 8 small subunits.

The protein localises to the plastid. It localises to the chloroplast. Its function is as follows. RuBisCO catalyzes two reactions: the carboxylation of D-ribulose 1,5-bisphosphate, the primary event in carbon dioxide fixation, as well as the oxidative fragmentation of the pentose substrate in the photorespiration process. Both reactions occur simultaneously and in competition at the same active site. Although the small subunit is not catalytic it is essential for maximal activity. The sequence is that of Ribulose bisphosphate carboxylase small subunit from Pylaiella littoralis (Seaweed).